The primary structure comprises 282 residues: Phosphatidylglycerol--prolipoprotein diacylglyceryl transferase (282 aa).

The next 3 helical transmembrane spans lie at 18-38, 56-76, and 89-109; these read IQVH…VALA, ILWA…IFQW, and IWDG…VVIL. Position 137 (R137) interacts with a 1,2-diacyl-sn-glycero-3-phospho-(1'-sn-glycerol). The helical transmembrane segment at 237–257 threads the bilayer; sequence VIRVSQALSVVLFFGSIGLMI.

It belongs to the Lgt family.

The protein resides in the cell membrane. The catalysed reaction is L-cysteinyl-[prolipoprotein] + a 1,2-diacyl-sn-glycero-3-phospho-(1'-sn-glycerol) = an S-1,2-diacyl-sn-glyceryl-L-cysteinyl-[prolipoprotein] + sn-glycerol 1-phosphate + H(+). It participates in protein modification; lipoprotein biosynthesis (diacylglyceryl transfer). In terms of biological role, catalyzes the transfer of the diacylglyceryl group from phosphatidylglycerol to the sulfhydryl group of the N-terminal cysteine of a prolipoprotein, the first step in the formation of mature lipoproteins. This Lactiplantibacillus plantarum (strain ATCC BAA-793 / NCIMB 8826 / WCFS1) (Lactobacillus plantarum) protein is Phosphatidylglycerol--prolipoprotein diacylglyceryl transferase.